We begin with the raw amino-acid sequence, 74 residues long: UPF0291 protein EF_0064 (74 aa).

Residues 53 to 74 (YDPTGEDVTPEKLKEEQQKYFD) are disordered. The span at 61–74 (TPEKLKEEQQKYFD) shows a compositional bias: basic and acidic residues.

The protein belongs to the UPF0291 family.

Its subcellular location is the cytoplasm. In Enterococcus faecalis (strain ATCC 700802 / V583), this protein is UPF0291 protein EF_0064.